A 305-amino-acid polypeptide reads, in one-letter code: Oxidoreductase swnR (305 aa).

It belongs to the NmrA-type oxidoreductase family. Isoflavone reductase subfamily.

The enzyme catalyses L-pipecolate + O2 = L-1-piperideine-6-carboxylate + H2O2 + H(+). Its pathway is mycotoxin biosynthesis. Its function is as follows. Oxidoreductase; part of the gene cluster that mediates the biosynthesis of swainsonine (SW), a cytotoxic fungal alkaloid and a potential cancer therapy drug. Swainsonine production occurs via a multibranched pathway and is dispensable for fungal colonization of plants and infection of insect hosts. The first step of swainsonine biosynthesis is the production of the precursor pipecolic acid (PA) via conversion of L-lysine (Lys) to 1-piperideine-6-carboxylate (P6C) by the aminotransferase swnA, the latter being further reduced to PA by the reductase swnR. PA can be converted from lysine by both the SW biosynthetic cluster and the unclustered genes such as lysine cyclodeaminase. The PKS-NRPS hybrid synthetase swnK uptakes and condensates PA and malonyl-CoA with and without skipping of the ketoreductase (KR) domain in order to produce 3 intermediates, 1-oxoindolizidine, (1S)-1-hydroxyindolizin, and (1R)-1-hydroxyindolizine; with the transisomer (1S)-1-hydroxyindolizin being predominant. The terminal thioester reductase (TE) domain of swnK is involved in reduction of the thioester bond to release the intermediate aldehydes. The oxidoreductase swnN could contribute to the reduction of 1-oxoindolizidine to (1S)-1-hydroxyindolizin and (1R)-1-hydroxyindolizine, contributing to the major route of SW production. The dioxygenase swnH2 would be responsible for the oxidization of (1R)-1-hydroxyindolizine into (1R,2S)-1,2-dihydroxyindolizine and of (1S)-1-hydroxyindolizin to yield both (1R,2S)-1,2-dihydroxyindolizine and (1S,2S)-1,2-dihydroxyindolizine. The dioxygenase swnH1 then performs the conversion of the 1,2-dihydroxyindolizine epimers to SW. This chain is Oxidoreductase swnR, found in Metarhizium robertsii (strain ARSEF 23 / ATCC MYA-3075) (Metarhizium anisopliae (strain ARSEF 23)).